The sequence spans 511 residues: Ribonuclease Y (511 aa).

A helical transmembrane segment spans residues 3 to 23 (VGILIGIIILGVVGFIQYTLI). The region spanning 201–286 (TVHVVALPND…EMVERAIKDV (86 aa)) is the KH domain. Residues 327–420 (VLKHSIEVSY…VQAADAISAA (94 aa)) enclose the HD domain.

Belongs to the RNase Y family.

Its subcellular location is the cell membrane. In terms of biological role, endoribonuclease that initiates mRNA decay. The sequence is that of Ribonuclease Y from Clostridium perfringens (strain SM101 / Type A).